A 222-amino-acid chain; its full sequence is Putative thymidylate synthase (222 aa).

Cys-139 is a catalytic residue.

It belongs to the thymidylate synthase family. Archaeal-type ThyA subfamily. Monomer.

The protein resides in the cytoplasm. It participates in pyrimidine metabolism; dTTP biosynthesis. Its function is as follows. May catalyze the biosynthesis of dTMP using an unknown cosubstrate. This is Putative thymidylate synthase from Methanocaldococcus jannaschii (strain ATCC 43067 / DSM 2661 / JAL-1 / JCM 10045 / NBRC 100440) (Methanococcus jannaschii).